Here is a 44-residue protein sequence, read N- to C-terminus: Photosystem I reaction center subunit IX (44 aa).

A helical membrane pass occupies residues 7-27 (YLSTAPVLTTLWFGSLAGLLI).

The protein belongs to the PsaJ family.

The protein resides in the plastid. It is found in the chloroplast thylakoid membrane. In terms of biological role, may help in the organization of the PsaE and PsaF subunits. This chain is Photosystem I reaction center subunit IX, found in Phalaenopsis aphrodite subsp. formosana (Moth orchid).